The following is a 30-amino-acid chain: Ribosome-inactivating protein momorcochin-S (30 aa).

This sequence belongs to the ribosome-inactivating protein family. Type 1 RIP subfamily. Post-translationally, glycosylated.

It catalyses the reaction Endohydrolysis of the N-glycosidic bond at one specific adenosine on the 28S rRNA.. Functionally, inactivates eukaryotic 60S ribosomal subunits. The chain is Ribosome-inactivating protein momorcochin-S from Momordica cochinchinensis (Spiny bitter cucumber).